A 511-amino-acid polypeptide reads, in one-letter code: MGQKESQFKVLWQLQTHEEYMKQTSSFLRDFNALERYNLKENFEALSSFDNGEKIWVEDAFTTFFGIPDVIQLSPFFYRSACSFGRDLNINRQRLTFSALARFLASYTGRHKDVWSDFESNLMIIASWCDSFPKFRVEVLKNSKQISRLIHSDVQNISNFFDQNFGIRRSNIYQLCLLLLCISKLKPGESVGCHINSFLDSMFVKEQKAAFYVLQGISPDISSNIIKPSYLLHFLESNPYFLKSLGSLFELALFPHSAHNQKVQDDVSPLNDFAILSPLIHAQICFFLPKSVWQVNGLTSLFRASFHGYSMYALERKMCNYHNPSILLIKAKKINANHKSSSRPISLDATIPRKYPPHCIGTDKAVPQKFGADFHNENILLGAYISTRWRQSHMGFFGDHSTLLFQLQPIHQVYYASNLDKNYCMFDKNVGLGFGLSRHKVTNKVQYDVPGVCMYIDDGLEYGLFRHAGDGAFKPATNYENFEYEERFLIQDLEVIGVDTTKPVEPIHIGL.

One can recognise a TLDc domain in the interval 274 to 499; the sequence is AILSPLIHAQ…IQDLEVIGVD (226 aa).

Belongs to the RTC5 family.

It localises to the cytoplasm. Its subcellular location is the nucleus. Functionally, may be involved in a process influencing telomere capping. This is Restriction of telomere capping protein 5 (rtc5) from Schizosaccharomyces pombe (strain 972 / ATCC 24843) (Fission yeast).